The primary structure comprises 943 residues: Protein translocase subunit SecA (943 aa).

ATP is bound by residues Gln90, 108-112, and Asp509; that span reads GEGKT. The disordered stretch occupies residues 535–562; the sequence is PDNEHKPPIPKQRNSKSKGGFSRKAGSN.

This sequence belongs to the SecA family. As to quaternary structure, monomer and homodimer. Part of the essential Sec protein translocation apparatus which comprises SecA, SecYEG and auxiliary proteins SecDF. Other proteins may also be involved.

The protein localises to the cell inner membrane. It is found in the cellular thylakoid membrane. Its subcellular location is the cytoplasm. It carries out the reaction ATP + H2O + cellular proteinSide 1 = ADP + phosphate + cellular proteinSide 2.. In terms of biological role, part of the Sec protein translocase complex. Interacts with the SecYEG preprotein conducting channel. Has a central role in coupling the hydrolysis of ATP to the transfer of proteins into and across the cell membrane, serving as an ATP-driven molecular motor driving the stepwise translocation of polypeptide chains across the membrane. Probably participates in protein translocation into and across both the cytoplasmic and thylakoid membranes in cyanobacterial cells. The polypeptide is Protein translocase subunit SecA (Prochlorococcus marinus (strain AS9601)).